Reading from the N-terminus, the 404-residue chain is Cysteine desulfurase IscS (404 aa).

Pyridoxal 5'-phosphate contacts are provided by residues Ala-75 to Thr-76, Asn-155, Gln-183, and Ser-203 to His-205. At Lys-206 the chain carries N6-(pyridoxal phosphate)lysine. Thr-243 contacts pyridoxal 5'-phosphate. Residue Cys-328 is the Cysteine persulfide intermediate of the active site. Residue Cys-328 coordinates [2Fe-2S] cluster.

It belongs to the class-V pyridoxal-phosphate-dependent aminotransferase family. NifS/IscS subfamily. Homodimer. Forms a heterotetramer with IscU, interacts with other sulfur acceptors. It depends on pyridoxal 5'-phosphate as a cofactor.

It localises to the cytoplasm. The enzyme catalyses (sulfur carrier)-H + L-cysteine = (sulfur carrier)-SH + L-alanine. The protein operates within cofactor biosynthesis; iron-sulfur cluster biosynthesis. In terms of biological role, master enzyme that delivers sulfur to a number of partners involved in Fe-S cluster assembly, tRNA modification or cofactor biosynthesis. Catalyzes the removal of elemental sulfur atoms from cysteine to produce alanine. Functions as a sulfur delivery protein for Fe-S cluster synthesis onto IscU, an Fe-S scaffold assembly protein, as well as other S acceptor proteins. The sequence is that of Cysteine desulfurase IscS from Haemophilus influenzae (strain PittEE).